Reading from the N-terminus, the 99-residue chain is METLSFEFPAGQPGRGRALVGCVGSGDLEVLLEPGQPGKLSIQVQTSVNGSASRWQHLFERLFDGQTPPALLIDIHDFGATPGVVRLRLEQGFEEIGHD.

At S25 the chain carries O-(phosphoribosyl dephospho-coenzyme A)serine.

It belongs to the MdcC family. Post-translationally, covalently binds the prosthetic group of malonate decarboxylase.

The protein resides in the cytoplasm. Functionally, subunit of malonate decarboxylase, it is an acyl carrier protein to which acetyl and malonyl thioester residues are bound via a 2'-(5''-phosphoribosyl)-3'-dephospho-CoA prosthetic group and turn over during the catalytic mechanism. The protein is Malonate decarboxylase acyl carrier protein of Pseudomonas fluorescens (strain ATCC BAA-477 / NRRL B-23932 / Pf-5).